Reading from the N-terminus, the 506-residue chain is Lysine--tRNA ligase (506 aa).

Mg(2+) is bound by residues Glu-416 and Glu-423.

Belongs to the class-II aminoacyl-tRNA synthetase family. In terms of assembly, homodimer. Mg(2+) is required as a cofactor.

It is found in the cytoplasm. The enzyme catalyses tRNA(Lys) + L-lysine + ATP = L-lysyl-tRNA(Lys) + AMP + diphosphate. The sequence is that of Lysine--tRNA ligase from Bordetella bronchiseptica (strain ATCC BAA-588 / NCTC 13252 / RB50) (Alcaligenes bronchisepticus).